A 429-amino-acid polypeptide reads, in one-letter code: MSSVSSQPQFRYTQPPSKVLHLRNLPWECTEEELIELGKPFGTVVNTKCNVGANRNQAFIEFEDLNQAIQMISYYASSSEPAQVRGKTVYLQYSNRQEIVNNKTTADVVGNVLLVTIEGDDARMVSIDVLHLVFSAFGFVHKITTFEKTAGYQALVQFTDAETATAAKLALDGRSIPRYLLAETVGQCSLKITYSAHTDLTVKFQSHRSRDYTNPYLPVAPSAIDSTGQVAVGVDGKKMEPESNVLLASIENMQYAVTLDVLHMVFAAFGEVQKIAMFDKNGGVQALIQYSDVQTAVVAKEALEGHCIYDGGFCKLHITYSRHTDLSIKVNNDRSRDYTMPNPPVPMPQQPVQNPYAGNPQQYHAAGGSHHQQQQQPQGGWVQPGGQGSMGMGGGGHNHYMAPPSSSSMHQGPGGHMPPQHYGGPGPMH.

Residue serine 2 is modified to N-acetylserine. 3 RRM domains span residues 18-96, 110-197, and 243-323; these read KVLH…YSNR, GNVL…YSAH, and SNVL…YSRH. The interval 331 to 429 is disordered; sequence NNDRSRDYTM…QHYGGPGPMH (99 aa). The segment covering 367–381 has biased composition (low complexity); it reads GGSHHQQQQQPQGGW. Residues 382 to 397 are compositionally biased toward gly residues; sequence VQPGGQGSMGMGGGGH.

The protein resides in the nucleus. In terms of biological role, plays a role in pre-mRNA splicing. Binds to the polypyrimidine tract of introns. May promote the binding of U2 snRNP to pre-mRNA. The polypeptide is Polypyrimidine tract-binding protein homolog 2 (Arabidopsis thaliana (Mouse-ear cress)).